A 335-amino-acid polypeptide reads, in one-letter code: tRNA pseudouridine synthase D (335 aa).

Asp-77 acts as the Nucleophile in catalysis. Positions 152–308 constitute a TRUD domain; that stretch reads GFPNYFTEQR…AQNLNWQFEP (157 aa).

It belongs to the pseudouridine synthase TruD family.

The enzyme catalyses uridine(13) in tRNA = pseudouridine(13) in tRNA. In terms of biological role, responsible for synthesis of pseudouridine from uracil-13 in transfer RNAs. This chain is tRNA pseudouridine synthase D, found in Actinobacillus succinogenes (strain ATCC 55618 / DSM 22257 / CCUG 43843 / 130Z).